The chain runs to 931 residues: Bifunctional glutamine synthetase adenylyltransferase/adenylyl-removing enzyme (931 aa).

The tract at residues 1–434 (MTLAPADLPV…STEFAALLAP (434 aa)) is adenylyl removase. Residues 441 to 931 (PDALANYWRS…ACRAAELPFA (491 aa)) form an adenylyl transferase region.

It belongs to the GlnE family. Mg(2+) is required as a cofactor.

The enzyme catalyses [glutamine synthetase]-O(4)-(5'-adenylyl)-L-tyrosine + phosphate = [glutamine synthetase]-L-tyrosine + ADP. It catalyses the reaction [glutamine synthetase]-L-tyrosine + ATP = [glutamine synthetase]-O(4)-(5'-adenylyl)-L-tyrosine + diphosphate. In terms of biological role, involved in the regulation of glutamine synthetase GlnA, a key enzyme in the process to assimilate ammonia. When cellular nitrogen levels are high, the C-terminal adenylyl transferase (AT) inactivates GlnA by covalent transfer of an adenylyl group from ATP to specific tyrosine residue of GlnA, thus reducing its activity. Conversely, when nitrogen levels are low, the N-terminal adenylyl removase (AR) activates GlnA by removing the adenylyl group by phosphorolysis, increasing its activity. The regulatory region of GlnE binds the signal transduction protein PII (GlnB) which indicates the nitrogen status of the cell. This Stenotrophomonas maltophilia (strain K279a) protein is Bifunctional glutamine synthetase adenylyltransferase/adenylyl-removing enzyme.